Here is a 338-residue protein sequence, read N- to C-terminus: Aspartate-semialdehyde dehydrogenase (338 aa).

NADP(+) is bound by residues 13–16 and 41–42; these read TGNV and SS. Phosphate is bound at residue Arg-101. The active-site Acyl-thioester intermediate is Cys-132. Gln-159 provides a ligand contact to substrate. NADP(+) is bound by residues 162–163 and Pro-187; that span reads SG. Lys-216 is a binding site for phosphate. Residue Arg-237 participates in substrate binding. The Proton acceptor role is filled by His-244. Residue Asn-317 coordinates NADP(+).

This sequence belongs to the aspartate-semialdehyde dehydrogenase family. As to quaternary structure, homodimer.

The catalysed reaction is L-aspartate 4-semialdehyde + phosphate + NADP(+) = 4-phospho-L-aspartate + NADPH + H(+). It functions in the pathway amino-acid biosynthesis; L-lysine biosynthesis via DAP pathway; (S)-tetrahydrodipicolinate from L-aspartate: step 2/4. Its pathway is amino-acid biosynthesis; L-methionine biosynthesis via de novo pathway; L-homoserine from L-aspartate: step 2/3. It participates in amino-acid biosynthesis; L-threonine biosynthesis; L-threonine from L-aspartate: step 2/5. Its function is as follows. Catalyzes the NADPH-dependent formation of L-aspartate-semialdehyde (L-ASA) by the reductive dephosphorylation of L-aspartyl-4-phosphate. This is Aspartate-semialdehyde dehydrogenase from Rickettsia conorii (strain ATCC VR-613 / Malish 7).